A 573-amino-acid polypeptide reads, in one-letter code: L-lactate dehydrogenase (cytochrome) (573 aa).

The N-terminal 73 residues, 1–73 (MFKSQLRTAT…LYQKDKFISA (73 aa)), are a transit peptide targeting the mitochondrion. In terms of domain architecture, Cytochrome b5 heme-binding spans 80 to 157 (DIELTPEIVS…PPEKHLGPLV (78 aa)). Heme b-binding residues include histidine 115, histidine 138, and tyrosine 208. The region spanning 182-542 (PPLSQMINLH…TPELLDTRSI (361 aa)) is the FMN hydroxy acid dehydrogenase domain. Tyrosine 208 serves as a coordination point for pyruvate. FMN-binding positions include 260-263 (SATA), serine 290, and glutamine 313. Tyrosine 315 contributes to the pyruvate binding site. Threonine 341 provides a ligand contact to FMN. Lysine 357 provides a ligand contact to heme b. Lysine 408 lines the FMN pocket. The pyruvate site is built by histidine 432 and arginine 435. FMN is bound by residues 468–472 (DGGVR) and 491–492 (GR).

This sequence in the N-terminal section; belongs to the cytochrome b5 family. The protein in the C-terminal section; belongs to the FMN-dependent alpha-hydroxy acid dehydrogenase family. As to quaternary structure, homotetramer. FMN is required as a cofactor. Requires heme b as cofactor.

Its subcellular location is the mitochondrion intermembrane space. It catalyses the reaction (S)-lactate + 2 Fe(III)-[cytochrome c] = 2 Fe(II)-[cytochrome c] + pyruvate + 2 H(+). Functionally, catalyzes the oxidation of (S)-lactate (L-lactate) to pyruvate with subsequent transfer of electrons to cytochrome c. Is involved in the utilization of (S)-lactate as a sole source of carbon for growth. In Wickerhamomyces anomalus (Yeast), this protein is L-lactate dehydrogenase (cytochrome) (CYB2).